We begin with the raw amino-acid sequence, 283 residues long: Large ribosomal subunit protein mL46 (283 aa).

Lys217 bears the N6-succinyllysine mark. At Lys228 the chain carries N6-acetyllysine. Lys246 carries the N6-succinyllysine modification.

It belongs to the mitochondrion-specific ribosomal protein mL46 family. In terms of assembly, component of the mitochondrial ribosome large subunit (39S) which comprises a 16S rRNA and about 50 distinct proteins.

It is found in the mitochondrion. The sequence is that of Large ribosomal subunit protein mL46 (Mrpl46) from Mus musculus (Mouse).